The primary structure comprises 445 residues: Arginine/agmatine antiporter (445 aa).

Residues 1 to 9 (MSSDADAHK) are Cytoplasmic-facing. The helical transmembrane segment at 10-30 (VGLIPVTLMVSGNIMGSGVFL) threads the bilayer. Residue Ile23 coordinates agmatine. Positions 23 and 26 each coordinate L-arginine. Residues 31-38 (LPANLAAT) are Periplasmic-facing. Residues 39–59 (GGIAIYGWLVTIIGALALSMV) form a helical membrane-spanning segment. Topologically, residues 60–98 (YAKMSSLDPSPGGSYAYARRCFGPFLGYQTNVLYWLACW) are cytoplasmic. Positions 96, 97, and 101 each coordinate agmatine. Ala96 serves as a coordination point for L-arginine. The helical transmembrane segment at 99-119 (IGNIAMVVIGVGYLSYFFPIL) threads the bilayer. The Periplasmic portion of the chain corresponds to 120–122 (KDP). A helical membrane pass occupies residues 123 to 143 (LVLTLTCVAVLWIFVLLNIVG). The Cytoplasmic portion of the chain corresponds to 144–152 (PKMITRVQA). The chain crosses the membrane as a helical span at residues 153-173 (VATVLALVPIVGIAVFGWFWF). At 174-196 (KGETYMAAWNVSGMNTFGAIQST) the chain is on the periplasmic side. A helical membrane pass occupies residues 197–217 (LNVTLWSFIGVESASVAAGVV). 2 residues coordinate L-arginine: Trp202 and Ile205. An agmatine-binding site is contributed by Ile205. Residues 218 to 225 (KNPKRNVP) lie on the Cytoplasmic side of the membrane. A helical membrane pass occupies residues 226–246 (IATIGGVLIAAVCYVLSTTAI). Residues 247 to 275 (MGMIPNAALRVSASPFGDAARMALGDTAG) lie on the Periplasmic side of the membrane. A helical transmembrane segment spans residues 276-296 (AIVSFCAAAGCLGSLGGWTLL). An agmatine-binding site is contributed by Trp293. The Cytoplasmic portion of the chain corresponds to 297-319 (AGQTAKAAADDGLFPPIFARVNK). The chain crosses the membrane as a helical span at residues 320 to 340 (AGTPVAGLLIVGVLMTIFQFS). The Periplasmic portion of the chain corresponds to 341–355 (SMSPNAAKEFGLVSS). Residues 356–376 (VSVIFTLVPYLYTCAALLLLG) traverse the membrane as a helical segment. Ser357 provides a ligand contact to L-arginine. Topologically, residues 377–385 (HGHFGKARP) are cytoplasmic. The chain crosses the membrane as a helical span at residues 386-406 (LYLLITFVAFVYCIWAVIGSG). The Periplasmic segment spans residues 407-408 (AK). The chain crosses the membrane as a helical span at residues 409–429 (EVMWSFVTLMVITALYALNYN). Residues 430–445 (RIHKNPYPLDAPVKQD) are Cytoplasmic-facing.

This sequence belongs to the amino acid-polyamine-organocation (APC) superfamily. Basic amino acid/polyamine antiporter (APA) (TC 2.A.3.2) family. In terms of assembly, homodimer; each subunit has its own individual transport capacity.

It localises to the cell inner membrane. The catalysed reaction is agmatine(in) + L-arginine(out) = agmatine(out) + L-arginine(in). Functionally, major component of the acid-resistance (AR) system allowing enteric pathogens to survive the acidic environment in the stomach. Exchanges extracellular arginine for its intracellular decarboxylation product agmatine (Agm) thereby expelling intracellular protons. Probably undergoes several conformational states in order to translocate the substrate across the membrane; keeps the substrate accessible to only 1 side of the membrane at a time by opening and closing 3 membrane-internal gates. The sequence is that of Arginine/agmatine antiporter (adiC) from Salmonella typhi.